The sequence spans 457 residues: Bifunctional protein GlmU (457 aa).

The segment at 1–230 (MSKRYAVVLA…FEESLGVNDR (230 aa)) is pyrophosphorylase. Residues 9–12 (LAAG), Lys-23, Gln-73, and 78–79 (GT) each bind UDP-N-acetyl-alpha-D-glucosamine. Residue Asp-103 coordinates Mg(2+). Residues Gly-140, Glu-155, Asn-170, and Asn-228 each contribute to the UDP-N-acetyl-alpha-D-glucosamine site. Asn-228 provides a ligand contact to Mg(2+). The linker stretch occupies residues 231-251 (IALAEASRLMQRRINENHMRN). Residues 252–457 (GVTLVNPENT…GYAKHLNHGK (206 aa)) form an N-acetyltransferase region. UDP-N-acetyl-alpha-D-glucosamine is bound by residues Arg-333 and Lys-351. The active-site Proton acceptor is the His-363. UDP-N-acetyl-alpha-D-glucosamine-binding residues include Tyr-366 and Asn-377. Residues 386 to 387 (NY), Ala-423, and Arg-440 contribute to the acetyl-CoA site.

The protein in the N-terminal section; belongs to the N-acetylglucosamine-1-phosphate uridyltransferase family. In the C-terminal section; belongs to the transferase hexapeptide repeat family. As to quaternary structure, homotrimer. Requires Mg(2+) as cofactor.

The protein resides in the cytoplasm. The catalysed reaction is alpha-D-glucosamine 1-phosphate + acetyl-CoA = N-acetyl-alpha-D-glucosamine 1-phosphate + CoA + H(+). The enzyme catalyses N-acetyl-alpha-D-glucosamine 1-phosphate + UTP + H(+) = UDP-N-acetyl-alpha-D-glucosamine + diphosphate. It functions in the pathway nucleotide-sugar biosynthesis; UDP-N-acetyl-alpha-D-glucosamine biosynthesis; N-acetyl-alpha-D-glucosamine 1-phosphate from alpha-D-glucosamine 6-phosphate (route II): step 2/2. The protein operates within nucleotide-sugar biosynthesis; UDP-N-acetyl-alpha-D-glucosamine biosynthesis; UDP-N-acetyl-alpha-D-glucosamine from N-acetyl-alpha-D-glucosamine 1-phosphate: step 1/1. It participates in bacterial outer membrane biogenesis; LPS lipid A biosynthesis. Its function is as follows. Catalyzes the last two sequential reactions in the de novo biosynthetic pathway for UDP-N-acetylglucosamine (UDP-GlcNAc). The C-terminal domain catalyzes the transfer of acetyl group from acetyl coenzyme A to glucosamine-1-phosphate (GlcN-1-P) to produce N-acetylglucosamine-1-phosphate (GlcNAc-1-P), which is converted into UDP-GlcNAc by the transfer of uridine 5-monophosphate (from uridine 5-triphosphate), a reaction catalyzed by the N-terminal domain. This chain is Bifunctional protein GlmU, found in Listeria monocytogenes serotype 4b (strain CLIP80459).